The primary structure comprises 216 residues: Redox-sensing transcriptional repressor Rex (216 aa).

A DNA-binding region (H-T-H motif) is located at residues 20–59; the sequence is QYYRLFKSLVEENVTRTNSQLISEKIGVDAATIRRDFSLF. Position 94 to 99 (94 to 99) interacts with NAD(+); it reads GVGNLG.

It belongs to the transcriptional regulatory Rex family. In terms of assembly, homodimer.

It localises to the cytoplasm. Its function is as follows. Modulates transcription in response to changes in cellular NADH/NAD(+) redox state. This Lactococcus lactis subsp. cremoris (strain SK11) protein is Redox-sensing transcriptional repressor Rex.